A 278-amino-acid polypeptide reads, in one-letter code: Pantothenate synthetase (278 aa).

30 to 37 (MGGLHQGH) is an ATP binding site. Histidine 37 (proton donor) is an active-site residue. Glutamine 61 is a (R)-pantoate binding site. Residue glutamine 61 coordinates beta-alanine. 146-149 (GQKD) is a binding site for ATP. (R)-pantoate is bound at residue glutamine 152. Residues isoleucine 175 and 183–186 (MSTR) contribute to the ATP site.

This sequence belongs to the pantothenate synthetase family. Homodimer.

The protein resides in the cytoplasm. The catalysed reaction is (R)-pantoate + beta-alanine + ATP = (R)-pantothenate + AMP + diphosphate + H(+). It functions in the pathway cofactor biosynthesis; (R)-pantothenate biosynthesis; (R)-pantothenate from (R)-pantoate and beta-alanine: step 1/1. Its function is as follows. Catalyzes the condensation of pantoate with beta-alanine in an ATP-dependent reaction via a pantoyl-adenylate intermediate. This Ruthia magnifica subsp. Calyptogena magnifica protein is Pantothenate synthetase.